Here is an 848-residue protein sequence, read N- to C-terminus: Neuroligin-3 (848 aa).

A signal peptide spans 1–37 (MWLQLGLPSLSLSPTPTVGRSLCLILWFLSLVLRAST). The Extracellular segment spans residues 38–709 (QAPAPTVNTH…NPRDYSTELS (672 aa)). N-linked (GlcNAc...) asparagine glycosylation is present at Asn98. The cysteines at positions 106 and 141 are disulfide-linked. A disordered region spans residues 169 to 195 (CRKGGSGAKKQGEDLADNDGDEDEDIR). Acidic residues predominate over residues 182 to 194 (DLADNDGDEDEDI). 2 disulfide bridges follow: Cys340–Cys351 and Cys510–Cys544. N-linked (GlcNAc...) asparagine glycosylation occurs at Asn545. 2 stretches are compositionally biased toward polar residues: residues 645 to 656 (TKVPPPDTTHSS) and 677 to 689 (AYSNENAPGSWNG). The segment at 645 to 691 (TKVPPPDTTHSSHITRRPNGKTWSTKRPAISPAYSNENAPGSWNGDQ) is disordered. A helical transmembrane segment spans residues 710–730 (VTIAVGASLLFLNVLAFAALY). Residues 731 to 848 (YRKDKRRQEP…LPNSHSTTRV (118 aa)) are Cytoplasmic-facing. At Ser745 the chain carries Phosphoserine. The residue at position 792 (Tyr792) is a Phosphotyrosine.

Belongs to the type-B carboxylesterase/lipase family. Homodimer, and heterodimer with NLGN1 and NLGN2. Interacts with neurexins NRXN1, NRXN2 and NRXN3. Interaction with neurexins is mediated by heparan sulfate glycan modification on neurexin. Interacts (via its C-terminus) with DLG4/PSD-95 (via PDZ domain 3). Post-translationally, the N-terminus is blocked. Detected in brain and on hippocampus neurons, especially at excitatory synapses. Detected in retina (at protein level). Expressed in brain, spinal cord and dorsal root ganglion.

The protein localises to the cell membrane. It is found in the synapse. Cell surface protein involved in cell-cell-interactions via its interactions with neurexin family members. Plays a role in synapse function and synaptic signal transmission, and probably mediates its effects by recruiting and clustering other synaptic proteins. May promote the initial formation of synapses, but is not essential for this. May also play a role in glia-glia or glia-neuron interactions in the developing peripheral nervous system. This chain is Neuroligin-3 (Nlgn3), found in Rattus norvegicus (Rat).